We begin with the raw amino-acid sequence, 572 residues long: Proline--tRNA ligase (572 aa).

Belongs to the class-II aminoacyl-tRNA synthetase family. ProS type 1 subfamily. Homodimer.

The protein localises to the cytoplasm. It catalyses the reaction tRNA(Pro) + L-proline + ATP = L-prolyl-tRNA(Pro) + AMP + diphosphate. Catalyzes the attachment of proline to tRNA(Pro) in a two-step reaction: proline is first activated by ATP to form Pro-AMP and then transferred to the acceptor end of tRNA(Pro). As ProRS can inadvertently accommodate and process non-cognate amino acids such as alanine and cysteine, to avoid such errors it has two additional distinct editing activities against alanine. One activity is designated as 'pretransfer' editing and involves the tRNA(Pro)-independent hydrolysis of activated Ala-AMP. The other activity is designated 'posttransfer' editing and involves deacylation of mischarged Ala-tRNA(Pro). The misacylated Cys-tRNA(Pro) is not edited by ProRS. In Caldicellulosiruptor bescii (strain ATCC BAA-1888 / DSM 6725 / KCTC 15123 / Z-1320) (Anaerocellum thermophilum), this protein is Proline--tRNA ligase.